Reading from the N-terminus, the 252-residue chain is 3-deoxy-manno-octulosonate cytidylyltransferase (252 aa).

Belongs to the KdsB family.

The protein resides in the cytoplasm. It catalyses the reaction 3-deoxy-alpha-D-manno-oct-2-ulosonate + CTP = CMP-3-deoxy-beta-D-manno-octulosonate + diphosphate. It functions in the pathway nucleotide-sugar biosynthesis; CMP-3-deoxy-D-manno-octulosonate biosynthesis; CMP-3-deoxy-D-manno-octulosonate from 3-deoxy-D-manno-octulosonate and CTP: step 1/1. It participates in bacterial outer membrane biogenesis; lipopolysaccharide biosynthesis. Functionally, activates KDO (a required 8-carbon sugar) for incorporation into bacterial lipopolysaccharide in Gram-negative bacteria. The protein is 3-deoxy-manno-octulosonate cytidylyltransferase of Thiobacillus denitrificans (strain ATCC 25259 / T1).